The chain runs to 211 residues: Probable chemoreceptor glutamine deamidase CheD (211 aa).

It belongs to the CheD family.

It carries out the reaction L-glutaminyl-[protein] + H2O = L-glutamyl-[protein] + NH4(+). Functionally, probably deamidates glutamine residues to glutamate on methyl-accepting chemotaxis receptors (MCPs), playing an important role in chemotaxis. The polypeptide is Probable chemoreceptor glutamine deamidase CheD (Hahella chejuensis (strain KCTC 2396)).